A 249-amino-acid polypeptide reads, in one-letter code: Acidic leucine-rich nuclear phosphoprotein 32 family member A (249 aa).

Thr15 carries the post-translational modification Phosphothreonine. Residue Ser17 is modified to Phosphoserine. LRR repeat units lie at residues 18-38, 43-64, 65-87, and 89-110; these read DVKE…EGLT, ELEF…PKLN, KLKK…AEKC, and NLTH…EPLK. Positions 123-161 constitute an LRRCT domain; the sequence is CEVTNLNDYRENVFKLLPQLTYLDGYDRDDKEAPDSDAE. A compositionally biased stretch (basic and acidic residues) spans 147 to 156; it reads GYDRDDKEAP. The disordered stretch occupies residues 147–249; sequence GYDRDDKEAP…EPEDEGEDDD (103 aa). The segment at 150-174 is necessary for tumor-suppressive function; that stretch reads RDDKEAPDSDAEGYVEGLDDDEEDE. The segment covering 157–230 has biased composition (acidic residues); it reads DSDAEGYVEG…DEEDEEELGE (74 aa). Phosphoserine occurs at positions 158 and 204. The interaction with E4F1 stretch occupies residues 165 to 249; that stretch reads EGLDDDEEDE…EPEDEGEDDD (85 aa).

Belongs to the ANP32 family. As to quaternary structure, component of the SET complex, composed of at least ANP32A, APEX1, HMGB2, NME1, SET and TREX1. Directly interacts with SET. Interacts with ATXN1/SCA1. Interacts with MAP1B. Interacts with ELAVL1. Part of the INHAT (inhibitor of histone acetyltransferases) complex. Interacts with E4F1. In terms of processing, the N-terminus is blocked. Post-translationally, phosphorylated on serine residues, at least in part by casein kinase 2/CK2. Some glutamate residues are glycylated by TTLL8. This modification occurs exclusively on glutamate residues and results in a glycine chain on the gamma-carboxyl group. Widely distributed in the central nervous system, with an abundant expression in the cerebellum.

The protein localises to the nucleus. The protein resides in the cytoplasm. Its subcellular location is the endoplasmic reticulum. Its function is as follows. Multifunctional protein that is involved in the regulation of many processes including tumor suppression, apoptosis, cell cycle progression or transcription. Promotes apoptosis by favouring the activation of caspase-9/CASP9 and allowing apoptosome formation. In addition, plays a role in the modulation of histone acetylation and transcription as part of the INHAT (inhibitor of histone acetyltransferases) complex. Inhibits the histone-acetyltranferase activity of EP300/CREBBP (CREB-binding protein) and EP300/CREBBP-associated factor by histone masking. Preferentially binds to unmodified histone H3 and sterically inhibiting its acetylation and phosphorylation leading to cell growth inhibition. Participates in other biochemical processes such as regulation of mRNA nuclear-to-cytoplasmic translocation and stability by its association with ELAVL1 (Hu-antigen R). Plays a role in E4F1-mediated transcriptional repression as well as inhibition of protein phosphatase 2A. This chain is Acidic leucine-rich nuclear phosphoprotein 32 family member A (ANP32A), found in Bos taurus (Bovine).